A 99-amino-acid polypeptide reads, in one-letter code: PE family immunomodulator PE35 (99 aa).

The region spanning 1–90 is the PE domain; that stretch reads MEKMSHDPIA…DVARTYSQID (90 aa).

It belongs to the mycobacterial PE family. In terms of assembly, interacts with PPE68. PE35/PPE68 complex interacts with human TLR2.

The protein localises to the secreted. It is found in the cell surface. In terms of biological role, plays a major role in RD1-associated pathogenesis, and may contribute to the establishment and maintenance of M.tuberculosis infection. Together with PPE68, stimulates the secretion of IL-10 and MCP-1 from human macrophages, via the interaction with human Toll-like receptor 2 (TLR2). The polypeptide is PE family immunomodulator PE35 (PE35) (Mycobacterium tuberculosis (strain ATCC 25618 / H37Rv)).